Consider the following 252-residue polypeptide: Imidazole glycerol phosphate synthase subunit HisF (252 aa).

Residues Asp13 and Asp132 contribute to the active site.

This sequence belongs to the HisA/HisF family. As to quaternary structure, heterodimer of HisH and HisF.

It is found in the cytoplasm. It catalyses the reaction 5-[(5-phospho-1-deoxy-D-ribulos-1-ylimino)methylamino]-1-(5-phospho-beta-D-ribosyl)imidazole-4-carboxamide + L-glutamine = D-erythro-1-(imidazol-4-yl)glycerol 3-phosphate + 5-amino-1-(5-phospho-beta-D-ribosyl)imidazole-4-carboxamide + L-glutamate + H(+). It participates in amino-acid biosynthesis; L-histidine biosynthesis; L-histidine from 5-phospho-alpha-D-ribose 1-diphosphate: step 5/9. In terms of biological role, IGPS catalyzes the conversion of PRFAR and glutamine to IGP, AICAR and glutamate. The HisF subunit catalyzes the cyclization activity that produces IGP and AICAR from PRFAR using the ammonia provided by the HisH subunit. The chain is Imidazole glycerol phosphate synthase subunit HisF from Campylobacter hominis (strain ATCC BAA-381 / DSM 21671 / CCUG 45161 / LMG 19568 / NCTC 13146 / CH001A).